Here is an 822-residue protein sequence, read N- to C-terminus: Microcephalin (822 aa).

In terms of domain architecture, BRCT 1 spans 10–99; sequence AFLKDVVAYV…ALVDESLFPA (90 aa). Disordered regions lie at residues 182-203, 219-243, and 266-295; these read MKEK…SQQN, PLSS…DQER, and SSFY…ESIN. Composition is skewed to polar residues over residues 189–203 and 219–235; these read LSPT…SQQN and PLSS…SSFG. Phosphoserine occurs at positions 273, 290, and 327. Residue T329 is modified to Phosphothreonine. Disordered regions lie at residues 335–366, 498–567, and 594–636; these read EHQV…LKKR, NDSP…SPED, and TGYS…PTRT. Over residues 522–541 the composition is skewed to polar residues; that stretch reads HPDTLSSSAHHITPLKGNST. 2 stretches are compositionally biased toward basic and acidic residues: residues 542-553 and 625-634; these read ETRDPGDGKGSP and KKSEKEEKPT. BRCT domains follow at residues 627–717 and 738–820; these read SEKE…PFEL and YQGT…NYQL.

Interacts with CDC27 and maybe other components of the APC/C complex. Interacts with histone variant H2AX under DNA damage conditions. High levels of expression are found in the developing forebrain and, in particular, in the walls of the lateral ventricles.

Its subcellular location is the cytoplasm. The protein resides in the cytoskeleton. It is found in the microtubule organizing center. It localises to the centrosome. Functionally, implicated in chromosome condensation and DNA damage induced cellular responses. May play a role in neurogenesis and regulation of the size of the cerebral cortex. This Mus musculus (Mouse) protein is Microcephalin.